We begin with the raw amino-acid sequence, 245 residues long: Ribonuclease PH (245 aa).

Residues Arg-86 and 124-126 (GTR) each bind phosphate.

Belongs to the RNase PH family. As to quaternary structure, homohexameric ring arranged as a trimer of dimers.

It carries out the reaction tRNA(n+1) + phosphate = tRNA(n) + a ribonucleoside 5'-diphosphate. In terms of biological role, phosphorolytic 3'-5' exoribonuclease that plays an important role in tRNA 3'-end maturation. Removes nucleotide residues following the 3'-CCA terminus of tRNAs; can also add nucleotides to the ends of RNA molecules by using nucleoside diphosphates as substrates, but this may not be physiologically important. Probably plays a role in initiation of 16S rRNA degradation (leading to ribosome degradation) during starvation. The sequence is that of Ribonuclease PH from Bacillus anthracis (strain A0248).